The following is a 305-amino-acid chain: Porphobilinogen deaminase (305 aa).

The residue at position 243 (C243) is an S-(dipyrrolylmethanemethyl)cysteine.

It belongs to the HMBS family. Monomer. Requires dipyrromethane as cofactor.

The enzyme catalyses 4 porphobilinogen + H2O = hydroxymethylbilane + 4 NH4(+). The protein operates within porphyrin-containing compound metabolism; protoporphyrin-IX biosynthesis; coproporphyrinogen-III from 5-aminolevulinate: step 2/4. In terms of biological role, tetrapolymerization of the monopyrrole PBG into the hydroxymethylbilane pre-uroporphyrinogen in several discrete steps. This is Porphobilinogen deaminase from Limosilactobacillus reuteri (strain DSM 20016) (Lactobacillus reuteri).